We begin with the raw amino-acid sequence, 198 residues long: Ribonuclease HII (198 aa).

One can recognise an RNase H type-2 domain in the interval Q10–S198. D16, E17, and D108 together coordinate a divalent metal cation.

This sequence belongs to the RNase HII family. It depends on Mn(2+) as a cofactor. Mg(2+) serves as cofactor.

The protein resides in the cytoplasm. The enzyme catalyses Endonucleolytic cleavage to 5'-phosphomonoester.. Functionally, endonuclease that specifically degrades the RNA of RNA-DNA hybrids. This is Ribonuclease HII from Shigella dysenteriae serotype 1 (strain Sd197).